Reading from the N-terminus, the 192-residue chain is Transmembrane protein 11, mitochondrial (192 aa).

The disordered stretch occupies residues 1–20 (MAAWGRRRLGPGSSGGSARE). The next 2 helical transmembrane spans lie at 84–100 (TAVL…LALP) and 107–124 (ISLP…LYGI).

Belongs to the TMEM11 family. Associates with the mitochondrial contact site and cristae organizing system (MICOS) complex, composed of at least MICOS10/MIC10, CHCHD3/MIC19, CHCHD6/MIC25, APOOL/MIC27, IMMT/MIC60, APOO/MIC23/MIC26 and QIL1/MIC13. This complex was also known under the names MINOS or MitOS complex. The MICOS complex associates with mitochondrial outer membrane proteins SAMM50, MTX1, MTX2 and DNAJC11, mitochondrial inner membrane protein TMEM11 and with HSPA9. Interacts with IMMT/MIC60.

It is found in the mitochondrion inner membrane. In terms of biological role, plays a role in mitochondrial morphogenesis. The chain is Transmembrane protein 11, mitochondrial (TMEM11) from Homo sapiens (Human).